The primary structure comprises 249 residues: Type I iodothyronine deiodinase (249 aa).

Residues 1–12 (MGLPRPGLWLKR) lie on the Extracellular side of the membrane. Residues 13–33 (LWVLVQVAVEVAVGKVLMTLF) traverse the membrane as a helical; Signal-anchor for type III membrane protein segment. At 34-249 (PERVKQNILA…VRAVLEELHS (216 aa)) the chain is on the cytoplasmic side. Residue Sec126 is part of the active site. Sec126 is a non-standard amino acid (selenocysteine).

It belongs to the iodothyronine deiodinase family. In terms of assembly, predominantly monomer. Can form homodimers but homodimerization is not essential for enzyme activity.

The protein localises to the cell membrane. The protein resides in the endoplasmic reticulum membrane. Its subcellular location is the basolateral cell membrane. The enzyme catalyses 3,3',5-triiodo-L-thyronine + iodide + A + H(+) = L-thyroxine + AH2. It carries out the reaction 3,3',5'-triiodo-L-thyronine + iodide + A + H(+) = L-thyroxine + AH2. It catalyses the reaction 3,3'-diiodo-L-thyronine + iodide + A + H(+) = 3,3',5'-triiodo-L-thyronine + AH2. The catalysed reaction is 3,3'-diiodo-L-thyronine + iodide + A + H(+) = 3,3',5-triiodo-L-thyronine + AH2. The enzyme catalyses 3'-iodo-L-thyronine + iodide + A + H(+) = 3',5'-diiodo-L-thyronine + AH2. It carries out the reaction 3-iodo-L-thyronine + iodide + A + H(+) = 3,5-diiodo-L-thyronine + AH2. It catalyses the reaction 3-iodo-L-thyronine + iodide + A + H(+) = 3,3'-diiodo-L-thyronine + AH2. The catalysed reaction is 3,3'-diiodothyronamine + iodide + A + H(+) = 3,3',5'-triiodothyronamine + AH2. The enzyme catalyses 3'-iodothyronamine + iodide + A + H(+) = 3',5'-diiodothyronamine + AH2. It carries out the reaction 3-iodothyronamine + iodide + A + H(+) = 3,3'-diiodothyronamine + AH2. It catalyses the reaction 3,3'-diiodothyronamine + iodide + A + H(+) = 3,3',5-triiodothyronamine + AH2. The catalysed reaction is 3-iodothyronamine + iodide + A + H(+) = 3,5-diiodothyronamine + AH2. The enzyme catalyses 3,3'-diiodo-L-thyronine sulfate + iodide + A + H(+) = 3,3',5'-triiodo-L-thyronine sulfate + AH2. It carries out the reaction 3,3',5'-triiodo-L-thyronine sulfate + iodide + A + H(+) = L-thyroxine sulfate + AH2. It catalyses the reaction 3,3'-diiodo-L-thyronine sulfate + iodide + A + H(+) = 3,3',5-triiodo-L-thyronine sulfate + AH2. Its function is as follows. Plays a crucial role in the metabolism of thyroid hormones (TH) and has specific roles in TH activation and inactivation by deiodination. Catalyzes the deiodination of L-thyroxine (T4) to 3,5,3'-triiodothyronine (T3) via outer-ring deiodination (ORD) and of T4 to 3,3',5'-triiodothyronine (rT3) via inner-ring deiodination (IRD). Catalyzes the deiodiantion of rT3 to 3,3'-diiodothyronine (3,3'-T2) and 3',5'-diiodothyronine (3',5'-T2) to 3'-monoiodothyronine (3'-T1) via ORD. Catalyzes the deiodination of T3 to 3,3'-T2, 3,5-diiodothyronine (3,5-T2) to 3-monoiodothyronine (3-T1) and 3,3'-T2 to 3-T1 via IRD. Catalyzes the phenolic ring deiodinations of 3,3',5'-triiodothyronamine, 3',5'-diiodothyronamine and 3,3'-diiodothyronamine as well as tyrosyl ring deiodinations of 3,5,3'-triiodothyronamine and 3,5-diiodothyronamine. Catalyzes the deiodination of L-thyroxine sulfate and 3,3',5-triiodo-L-thyronine sulfate via IRD and of 3,3',5'-triiodo-L-thyronine sulfate via ORD. The polypeptide is Type I iodothyronine deiodinase (DIO1) (Oryctolagus cuniculus (Rabbit)).